The chain runs to 187 residues: Ribonuclease HII (187 aa).

An RNase H type-2 domain is found at 1-187; sequence MIILGIDEAG…YKPVQVLLNE (187 aa). 3 residues coordinate a divalent metal cation: D7, E8, and D99.

The protein belongs to the RNase HII family. Requires Mn(2+) as cofactor. The cofactor is Mg(2+).

Its subcellular location is the cytoplasm. It catalyses the reaction Endonucleolytic cleavage to 5'-phosphomonoester.. Endonuclease that specifically degrades the RNA of RNA-DNA hybrids. The chain is Ribonuclease HII from Francisella tularensis subsp. holarctica (strain FTNF002-00 / FTA).